Here is a 287-residue protein sequence, read N- to C-terminus: Bifunctional protein FolD (287 aa).

NADP(+) contacts are provided by residues Gly-166 to Ser-168, Ser-191, and Ile-232.

The protein belongs to the tetrahydrofolate dehydrogenase/cyclohydrolase family. Homodimer.

The enzyme catalyses (6R)-5,10-methylene-5,6,7,8-tetrahydrofolate + NADP(+) = (6R)-5,10-methenyltetrahydrofolate + NADPH. It carries out the reaction (6R)-5,10-methenyltetrahydrofolate + H2O = (6R)-10-formyltetrahydrofolate + H(+). The protein operates within one-carbon metabolism; tetrahydrofolate interconversion. Functionally, catalyzes the oxidation of 5,10-methylenetetrahydrofolate to 5,10-methenyltetrahydrofolate and then the hydrolysis of 5,10-methenyltetrahydrofolate to 10-formyltetrahydrofolate. This Haemophilus ducreyi (strain 35000HP / ATCC 700724) protein is Bifunctional protein FolD.